The chain runs to 358 residues: Probable aminomethyltransferase (358 aa).

Belongs to the GcvT family. In terms of assembly, the glycine cleavage system is composed of four proteins: P, T, L and H.

It catalyses the reaction N(6)-[(R)-S(8)-aminomethyldihydrolipoyl]-L-lysyl-[protein] + (6S)-5,6,7,8-tetrahydrofolate = N(6)-[(R)-dihydrolipoyl]-L-lysyl-[protein] + (6R)-5,10-methylene-5,6,7,8-tetrahydrofolate + NH4(+). The glycine cleavage system catalyzes the degradation of glycine. This is Probable aminomethyltransferase from Natronomonas pharaonis (strain ATCC 35678 / DSM 2160 / CIP 103997 / JCM 8858 / NBRC 14720 / NCIMB 2260 / Gabara) (Halobacterium pharaonis).